The chain runs to 739 residues: Copalyl diphosphate synthase 1 (739 aa).

Residue K154 coordinates substrate. 2 residues coordinate Mg(2+): D287 and D289. The short motif at D287 to D290 is the DXDD motif element. A substrate-binding site is contributed by K373.

Belongs to the terpene synthase family. Mg(2+) is required as a cofactor.

It catalyses the reaction (2E,6E,10E)-geranylgeranyl diphosphate = (+)-copalyl diphosphate. The protein operates within secondary metabolite biosynthesis; terpenoid biosynthesis. Functionally, monofunctional diterpene synthase converting geranylgeranyl diphosphate to copalyl diphosphate. The chain is Copalyl diphosphate synthase 1 (CPS1) from Selaginella moellendorffii (Spikemoss).